The primary structure comprises 134 residues: UPF0715 membrane protein YoaG (134 aa).

A run of 4 helical transmembrane segments spans residues 9–29 (LMTLGLSSLTFGLLLGFYSFV), 35–55 (IIALFTAAIALLYGFVVYGLF), 72–92 (VMYLLIYSVVAFIAAFLFFVI), and 106–126 (FYYMLSIAAAVIYWLWDSLIL).

Belongs to the UPF0715 family.

The protein resides in the cell membrane. This chain is UPF0715 membrane protein YoaG (yoaG), found in Bacillus subtilis (strain 168).